The following is a 265-amino-acid chain: NADH dehydrogenase [ubiquinone] iron-sulfur protein 3, mitochondrial (265 aa).

A mitochondrion-targeting transit peptide spans 1–33 (MAALIRNLGARAAVAALSAKHVVPAAGSTALRM).

It belongs to the complex I 30 kDa subunit family. In terms of assembly, part of the mitochondrial membrane respiratory chain NADH dehydrogenase (Complex I). Interacts with sicily; interaction is stronger with unprocessed sicily protein.

The protein localises to the mitochondrion. The enzyme catalyses a ubiquinone + NADH + 5 H(+)(in) = a ubiquinol + NAD(+) + 4 H(+)(out). Functionally, core subunit of the mitochondrial membrane respiratory chain NADH dehydrogenase (Complex I) that is believed to belong to the minimal assembly required for catalysis. Complex I functions in the transfer of electrons from NADH to the respiratory chain. The immediate electron acceptor for the enzyme is believed to be ubiquinone. The sequence is that of NADH dehydrogenase [ubiquinone] iron-sulfur protein 3, mitochondrial from Drosophila melanogaster (Fruit fly).